The primary structure comprises 2244 residues: Multifunctional protein ura1 (2244 aa).

Residues 1–437 (MSGLLPSLSS…GPRDTEFLFD (437 aa)) are GATase (Glutamine amidotransferase). The interval 16–44 (QSEALGMPRTHGPKPSENDPKEPTCSPSP) is disordered. L-glutamine-binding residues include Ser-101, Gly-309, and Gly-311. The Glutamine amidotransferase type-1 domain occupies 264-449 (RILVIDVGMK…IDVVKRSADA (186 aa)). Catalysis depends on Cys-338, which acts as the Nucleophile; for GATase activity. L-glutamine-binding residues include Gln-342, Asn-380, Gly-382, and Tyr-383. Residues His-422 and Glu-424 each act as for GATase activity in the active site. Residues 438–477 (VFIDVVKRSADAKSLQPFKLPGGTIEENRSRHPLVDAKRV) are linker. The tract at residues 478-1014 (LILGSGGLSI…VEHDIHFNDK (537 aa)) is CPSase A. A CPSase (Carbamoyl phosphate synthase) region spans residues 478-1514 (LILGSGGLSI…TNVKCAKLMI (1037 aa)). ATP-binding residues include Arg-594, Arg-634, Gly-640, Gly-641, Arg-671, Met-673, Glu-678, Gly-704, Ile-705, His-706, Gln-747, and Glu-761. Residues 598-790 (ARAMDEINEK…LAFTAAKLGL (193 aa)) form the ATP-grasp 1 domain. The Mg(2+) site is built by Gln-747, Glu-761, and Asn-763. Mn(2+)-binding residues include Gln-747, Glu-761, and Asn-763. Residues 1015–1514 (GVMVLGSGVY…TNVKCAKLMI (500 aa)) are CPSase B. Ser-1119 carries the phosphoserine modification. One can recognise an ATP-grasp 2 domain in the interval 1133-1324 (SRMLDDIGVD…MISMATDVIM (192 aa)). The ATP site is built by Arg-1169, Lys-1208, Ile-1210, Glu-1215, Gly-1240, Val-1241, His-1242, Ser-1243, Gln-1283, and Glu-1295. Mg(2+) contacts are provided by Gln-1283, Glu-1295, and Asn-1297. Mn(2+) contacts are provided by Gln-1283, Glu-1295, and Asn-1297. The 163-residue stretch at 1390–1552 (FRLPKKNILI…INISAFLPEF (163 aa)) folds into the MGS-like domain. Residues 1515–1524 (EAICRNLDFS) are linker. The interval 1525 to 1853 (LSTVDFQSSF…FDGHDVFFDG (329 aa)) is defective DHOase domain. Positions 1854–1935 (ELNFEHTYGR…VQLINSSPFY (82 aa)) are linker. A phosphoserine mark is found at Ser-1881 and Ser-1885. An ATCase (Aspartate transcarbamylase) region spans residues 1936–2244 (RKHIISVHQV…CVMGATEVAN (309 aa)). 2 residues coordinate carbamoyl phosphate: Arg-1988 and Thr-1989. Lys-2016 contributes to the L-aspartate binding site. Carbamoyl phosphate is bound by residues Arg-2037, His-2065, and Gln-2068. 2 residues coordinate L-aspartate: Arg-2098 and Arg-2160. Residues Leu-2199 and Pro-2200 each coordinate carbamoyl phosphate.

The protein in the N-terminal section; belongs to the CarA family. It in the 2nd section; belongs to the CarB family. This sequence in the 3rd section; belongs to the metallo-dependent hydrolases superfamily. DHOase family. CAD subfamily. In the C-terminal section; belongs to the aspartate/ornithine carbamoyltransferase superfamily. ATCase family. The cofactor is Mg(2+). Mn(2+) serves as cofactor.

The catalysed reaction is hydrogencarbonate + L-glutamine + 2 ATP + H2O = carbamoyl phosphate + L-glutamate + 2 ADP + phosphate + 2 H(+). The enzyme catalyses L-glutamine + H2O = L-glutamate + NH4(+). It catalyses the reaction hydrogencarbonate + NH4(+) + 2 ATP = carbamoyl phosphate + 2 ADP + phosphate + 2 H(+). It carries out the reaction carbamoyl phosphate + L-aspartate = N-carbamoyl-L-aspartate + phosphate + H(+). Its pathway is pyrimidine metabolism; UMP biosynthesis via de novo pathway; (S)-dihydroorotate from bicarbonate: step 1/3. It functions in the pathway pyrimidine metabolism; UMP biosynthesis via de novo pathway; (S)-dihydroorotate from bicarbonate: step 2/3. With respect to regulation, both CPSase and ATCase activities are feedback inhibited by the end product UTP. In terms of biological role, multifunctional protein that encodes the first 2 enzymatic activities of the de novo pyrimidine pathway: carbamoylphosphate synthetase (CPSase; EC 6.3.5.5) and aspartate transcarbamylase (ATCase; EC 2.1.3.2). The CPSase-function is accomplished in 2 steps, by a glutamine-dependent amidotransferase activity (GATase) that binds and cleaves glutamine to produce ammonia, followed by an ammonium-dependent carbamoyl phosphate synthetase, which reacts with the ammonia, hydrogencarbonate and ATP to form carbamoyl phosphate. The endogenously produced carbamoyl phosphate is sequestered and channeled to the ATCase active site. ATCase then catalyzes the formation of carbamoyl-L-aspartate from L-aspartate and carbamoyl phosphate. The polypeptide is Multifunctional protein ura1 (ura1) (Schizosaccharomyces pombe (strain 972 / ATCC 24843) (Fission yeast)).